The following is a 229-amino-acid chain: Small ribosomal subunit protein uS3 (229 aa).

The region spanning 18-87 (IDEYLAKQYY…NPQITITNVE (70 aa)) is the KH type-2 domain.

This sequence belongs to the universal ribosomal protein uS3 family. As to quaternary structure, part of the 30S ribosomal subunit.

Functionally, binds the lower part of the 30S subunit head. This Saccharolobus solfataricus (strain ATCC 35092 / DSM 1617 / JCM 11322 / P2) (Sulfolobus solfataricus) protein is Small ribosomal subunit protein uS3.